A 372-amino-acid polypeptide reads, in one-letter code: Alanine dehydrogenase (372 aa).

Substrate is bound by residues Arg-15 and Lys-75. His-96 serves as the catalytic Proton donor/acceptor. Residues Ser-134, 178–179 (IA), Asp-198, Ser-220, 239–240 (VL), 267–270 (IAID), Arg-280, and 299–302 (VANM) each bind NAD(+). The active-site Proton donor/acceptor is the Asp-270.

The protein belongs to the AlaDH/PNT family. In terms of assembly, homohexamer.

The protein resides in the cytoplasm. It catalyses the reaction L-alanine + NAD(+) + H2O = pyruvate + NH4(+) + NADH + H(+). Its pathway is amino-acid degradation; L-alanine degradation via dehydrogenase pathway; NH(3) and pyruvate from L-alanine: step 1/1. With respect to regulation, inhibited by p-chloromercuribenzoate and HgCl(2) and by Cu(2+) and Pb(2+) salts, unaffected by amino acids such as D-alanine and beta-alanine or by nucleotides or nucleosides. Functionally, catalyzes the reversible reductive amination of pyruvate to L-alanine. Prefers L-alanine for oxidative deamination, other substrates are poorly reactive. In the other direction 2-oxobutyrate is almost as reactive as pyruvate. Ammonia is the sole amino donor for the reductive amination of pyruvate, NADPH is inert. Reductive amination proceeds through a sequential, ordered ternary-binary mechanism, where NADH binds first followed by ammonia and pyruvate; the products are released in the order L-alanine and NAD(+). A key factor in the assimilation of L-alanine as an energy source via the tricarboxylic acid cycle during sporulation. The sequence is that of Alanine dehydrogenase (ald) from Lysinibacillus sphaericus (Bacillus sphaericus).